A 278-amino-acid polypeptide reads, in one-letter code: Elongation factor Ts (278 aa).

Positions 82–85 are involved in Mg(2+) ion dislocation from EF-Tu; sequence TDFV.

The protein belongs to the EF-Ts family.

Its subcellular location is the cytoplasm. In terms of biological role, associates with the EF-Tu.GDP complex and induces the exchange of GDP to GTP. It remains bound to the aminoacyl-tRNA.EF-Tu.GTP complex up to the GTP hydrolysis stage on the ribosome. The polypeptide is Elongation factor Ts (tsf) (Streptomyces coelicolor (strain ATCC BAA-471 / A3(2) / M145)).